The primary structure comprises 280 residues: 4-deoxy-L-threo-5-hexosulose-uronate ketol-isomerase (280 aa).

4 residues coordinate Zn(2+): His-198, His-200, Glu-205, and His-247.

Belongs to the KduI family. Zn(2+) serves as cofactor.

The enzyme catalyses 5-dehydro-4-deoxy-D-glucuronate = 3-deoxy-D-glycero-2,5-hexodiulosonate. It participates in glycan metabolism; pectin degradation; 2-dehydro-3-deoxy-D-gluconate from pectin: step 4/5. Its function is as follows. Catalyzes the isomerization of 5-dehydro-4-deoxy-D-glucuronate to 3-deoxy-D-glycero-2,5-hexodiulosonate. The sequence is that of 4-deoxy-L-threo-5-hexosulose-uronate ketol-isomerase from Bacteroides fragilis (strain ATCC 25285 / DSM 2151 / CCUG 4856 / JCM 11019 / LMG 10263 / NCTC 9343 / Onslow / VPI 2553 / EN-2).